Reading from the N-terminus, the 152-residue chain is Superoxide dismutase [Cu-Zn] (152 aa).

Residue S2 is modified to N-acetylserine. Cu cation is bound by residues H44, H46, and H61. The cysteines at positions 55 and 144 are disulfide-linked. Positions 61, 69, 78, and 81 each coordinate Zn(2+). A Cu cation-binding site is contributed by H118.

The protein belongs to the Cu-Zn superoxide dismutase family. Monomer. The cofactor is Cu cation. Zn(2+) serves as cofactor.

The protein localises to the cytoplasm. It catalyses the reaction 2 superoxide + 2 H(+) = H2O2 + O2. Its activity is regulated as follows. Inhibited by KCN and diethyldithiocarbamate. In terms of biological role, destroys radicals which are normally produced within the cells and which are toxic to biological systems. The plasma superoxide dismutase has phagocytosis-stimulating activity and may play an important role in the biological defenses of the organism. This is Superoxide dismutase [Cu-Zn] from Halocynthia roretzi (Sea squirt).